The primary structure comprises 74 residues: MEASAAKFIGAGLAAIGMIGSGIGVGNIWANLIATVGRNPSAKANVELYGWIGFAVTEAIALFALVVALMVLFA.

The next 2 membrane-spanning stretches (helical) occupy residues 8-28 (FIGA…VGNI) and 52-72 (IGFA…LMVL).

This sequence belongs to the ATPase C chain family. In terms of assembly, F-type ATPases have 2 components, F(1) - the catalytic core - and F(0) - the membrane proton channel. F(1) has five subunits: alpha(3), beta(3), gamma(1), delta(1), epsilon(1). F(0) has three main subunits: a(1), b(2) and c(10-14). The alpha and beta chains form an alternating ring which encloses part of the gamma chain. F(1) is attached to F(0) by a central stalk formed by the gamma and epsilon chains, while a peripheral stalk is formed by the delta and b chains.

It localises to the cell inner membrane. Its function is as follows. F(1)F(0) ATP synthase produces ATP from ADP in the presence of a proton or sodium gradient. F-type ATPases consist of two structural domains, F(1) containing the extramembraneous catalytic core and F(0) containing the membrane proton channel, linked together by a central stalk and a peripheral stalk. During catalysis, ATP synthesis in the catalytic domain of F(1) is coupled via a rotary mechanism of the central stalk subunits to proton translocation. In terms of biological role, key component of the F(0) channel; it plays a direct role in translocation across the membrane. A homomeric c-ring of between 10-14 subunits forms the central stalk rotor element with the F(1) delta and epsilon subunits. In Paramagnetospirillum magneticum (strain ATCC 700264 / AMB-1) (Magnetospirillum magneticum), this protein is ATP synthase subunit c.